Here is a 510-residue protein sequence, read N- to C-terminus: Beta-glucosidase 26 (510 aa).

An N-terminal signal peptide occupies residues 1 to 27 (MRKFIAALRLALAAAAHLLLTLPPAQC). Glutamine 59 provides a ligand contact to a beta-D-glucoside. N-linked (GlcNAc...) asparagine glycans are attached at residues asparagine 87 and asparagine 127. A beta-D-glucoside contacts are provided by residues histidine 160 and 205-206 (NE). Glutamate 206 serves as the catalytic Proton donor. A disulfide bridge connects residues cysteine 225 and cysteine 228. An N-linked (GlcNAc...) asparagine glycan is attached at asparagine 233. A beta-D-glucoside contacts are provided by tyrosine 345 and glutamate 416. Catalysis depends on glutamate 416, which acts as the Nucleophile. Asparagine 424 carries N-linked (GlcNAc...) asparagine glycosylation. A beta-D-glucoside-binding positions include tryptophan 463, 470–471 (EW), and phenylalanine 479.

Belongs to the glycosyl hydrolase 1 family.

The enzyme catalyses Hydrolysis of terminal, non-reducing beta-D-glucosyl residues with release of beta-D-glucose.. Hydrolyzes p-nitrophenyl beta-D-glucoside, p-nitrophenyl beta-D-mannoside, p-nitrophenyl beta-D-galactoside, p-nitrophenyl beta-D-xyloside, p-nitrophenyl beta-D-fucoside, p-nitrophenyl beta-L-arabinoside, cello-oligosaccharides, laminari-oligosaccharides and sophorose. The protein is Beta-glucosidase 26 (BGLU26) of Oryza sativa subsp. japonica (Rice).